Here is a 157-residue protein sequence, read N- to C-terminus: Prefoldin subunit alpha (157 aa).

This sequence belongs to the prefoldin subunit alpha family. Heterohexamer of two alpha and four beta subunits.

Its subcellular location is the cytoplasm. Its function is as follows. Molecular chaperone capable of stabilizing a range of proteins. Seems to fulfill an ATP-independent, HSP70-like function in archaeal de novo protein folding. The polypeptide is Prefoldin subunit alpha (Methanopyrus kandleri (strain AV19 / DSM 6324 / JCM 9639 / NBRC 100938)).